The sequence spans 180 residues: Epididymal-specific lipocalin-6 (180 aa).

An N-terminal signal peptide occupies residues 1–20 (MGGLLLAALLALVAVPRAQA). Cys81 and Cys174 are joined by a disulfide.

Belongs to the calycin superfamily. Lipocalin family.

The protein localises to the secreted. In terms of biological role, may play a role in male fertility. This Macaca mulatta (Rhesus macaque) protein is Epididymal-specific lipocalin-6 (LCN6).